Here is a 2936-residue protein sequence, read N- to C-terminus: Neurobeachin (2936 aa).

The disordered stretch occupies residues 961 to 985 (ENIKKGKKGNVSTISGLSSQTAGAK). Positions 970–982 (NVSTISGLSSQTA) are enriched in polar residues. Phosphoserine is present on residues S1001 and S1004. Composition is skewed to polar residues over residues 1203 to 1220 (TSDG…SSTK) and 1231 to 1241 (TLETESSNSKA). Disordered regions lie at residues 1203–1222 (TSDG…TKGL), 1231–1265 (TLET…ESGK), and 1270–1289 (IQTT…QQDR). Residues 1253–1265 (DTERSDDGKESGK) are compositionally biased toward basic and acidic residues. Residues 1270–1286 (IQTTATTQAVQGRSSTQ) show a composition bias toward polar residues. A WD 1 repeat occupies 1316–1358 (TTMFRIPEFKWSPMHQRLLTDLLFALETDVHVWRSHSTKSVMD). Disordered stretches follow at residues 1480-1521 (QRDR…LSPI), 1639-1667 (PDTV…DSGM), 1701-1721 (VKKS…PAPS), and 1830-1850 (TGAV…VNGA). S1519 carries the post-translational modification Phosphoserine. Positions 1701-1714 (VKKSQESLTEHPSE) are enriched in basic and acidic residues. Residues S1704 and S1707 each carry the phosphoserine modification. Positions 1835–1845 (SGSSSSSSSSS) are enriched in low complexity. Position 2128 is a phosphoserine (S2128). Residues 2137–2245 (NLAGPVVLST…TVKKVVYSLP (109 aa)) form the BEACH-type PH domain. The region spanning 2264-2553 (ATPRQLYKSS…QLLIEPHPPR (290 aa)) is the BEACH domain. Residue S2565 is modified to Phosphoserine. WD repeat units follow at residues 2708–2751 (GHWD…HIIG), 2768–2808 (GHDH…RALE), 2850–2889 (EIND…QLYI), and 2892–2931 (GCDA…WHYE).

This sequence belongs to the WD repeat neurobeachin family. In terms of assembly, interacts with RII subunit of PKA. As to expression, forebrain, brainstem and cerebellum.

It localises to the membrane. The protein localises to the endomembrane system. It is found in the postsynaptic cell membrane. Functionally, binds to type II regulatory subunits of protein kinase A and anchors/targets them to the membrane. May anchor the kinase to cytoskeletal and/or organelle-associated proteins. May have a role in membrane trafficking. This chain is Neurobeachin (Nbea), found in Mus musculus (Mouse).